The chain runs to 309 residues: Ankyrin repeat protein VACWR203 (309 aa).

5 ANK repeats span residues 13 to 44 (SVFK…SLTI), 110 to 142 (KYGT…DINA), 160 to 189 (FVYH…DLTI), 197 to 231 (PVVY…RASH), and 269 to 298 (EGRT…DIVV).

It belongs to the orthopoxviruses VACWR203 protein family.

The chain is Ankyrin repeat protein VACWR203 from Bos taurus (Bovine).